The sequence spans 328 residues: DNA repair protein RAD51 homolog 4 (328 aa).

Residues 1–83 (MGVLRVGLCP…ELKTSTAILS (83 aa)) are preferentially binds ssDNA. ATP is bound at residue 107–114 (GGPGSGKT).

This sequence belongs to the RecA family. RAD51 subfamily. In terms of assembly, part of the BCDX2 complex consisting of RAD51B, RAD51C, RAD51D and XRCC2; the complex has a ring-like structure arranged into a flat disc around a central channel. In the absence of DNA, the BCDX2 subcomplex XRCC2:RAD51D formed a multimeric ring structure; in the presence of single-stranded DNA it formed a filamentous structure with the ssDNA. Interacts with SWSAP1 and ZSWIM7; involved in homologous recombination repair. Interacts with BLM; required for stimulation of BLM activity by the BCDX2 subcomplex XRCC2:RAD51D. As to expression, expressed in colon, prostate, spleen, testis, ovary, thymus and small intestine. Weakly expressed in leukocytes.

Its subcellular location is the nucleus. It localises to the cytoplasm. The protein resides in the cytoskeleton. The protein localises to the microtubule organizing center. It is found in the centrosome. Its subcellular location is the chromosome. It localises to the telomere. Its function is as follows. Involved in the homologous recombination repair (HRR) pathway of double-stranded DNA breaks arising during DNA replication or induced by DNA-damaging agents. Bind to single-stranded DNA (ssDNA) and has DNA-dependent ATPase activity. Part of the RAD51 paralog protein complex BCDX2 which acts in the BRCA1-BRCA2-dependent HR pathway. Upon DNA damage, BCDX2 acts downstream of BRCA2 recruitment and upstream of RAD51 recruitment. BCDX2 binds predominantly to the intersection of the four duplex arms of the Holliday junction and to junction of replication forks. The BCDX2 complex was originally reported to bind single-stranded DNA, single-stranded gaps in duplex DNA and specifically to nicks in duplex DNA. Involved in telomere maintenance. The BCDX2 subcomplex XRCC2:RAD51D can stimulate Holliday junction resolution by BLM. This Homo sapiens (Human) protein is DNA repair protein RAD51 homolog 4 (RAD51D).